The sequence spans 347 residues: Holliday junction branch migration complex subunit RuvB (347 aa).

The tract at residues 1-183 is large ATPase domain (RuvB-L); the sequence is MTPPSRIVTP…FGIPIRLNFY (183 aa). ATP contacts are provided by residues L22, R23, G64, K67, T68, T69, 130–132, R173, Y183, and R220; that span reads EDF. T68 contacts Mg(2+). Residues 184–254 form a small ATPAse domain (RuvB-S) region; it reads TVEELEGIVS…IADHALSALE (71 aa). Residues 257–347 are head domain (RuvB-H); the sequence is AAGLDAMDRR…QFGLFGGDEE (91 aa). The DNA site is built by R293, R312, and R317.

Belongs to the RuvB family. Homohexamer. Forms an RuvA(8)-RuvB(12)-Holliday junction (HJ) complex. HJ DNA is sandwiched between 2 RuvA tetramers; dsDNA enters through RuvA and exits via RuvB. An RuvB hexamer assembles on each DNA strand where it exits the tetramer. Each RuvB hexamer is contacted by two RuvA subunits (via domain III) on 2 adjacent RuvB subunits; this complex drives branch migration. In the full resolvosome a probable DNA-RuvA(4)-RuvB(12)-RuvC(2) complex forms which resolves the HJ.

The protein resides in the cytoplasm. It carries out the reaction ATP + H2O = ADP + phosphate + H(+). Functionally, the RuvA-RuvB-RuvC complex processes Holliday junction (HJ) DNA during genetic recombination and DNA repair, while the RuvA-RuvB complex plays an important role in the rescue of blocked DNA replication forks via replication fork reversal (RFR). RuvA specifically binds to HJ cruciform DNA, conferring on it an open structure. The RuvB hexamer acts as an ATP-dependent pump, pulling dsDNA into and through the RuvAB complex. RuvB forms 2 homohexamers on either side of HJ DNA bound by 1 or 2 RuvA tetramers; 4 subunits per hexamer contact DNA at a time. Coordinated motions by a converter formed by DNA-disengaged RuvB subunits stimulates ATP hydrolysis and nucleotide exchange. Immobilization of the converter enables RuvB to convert the ATP-contained energy into a lever motion, pulling 2 nucleotides of DNA out of the RuvA tetramer per ATP hydrolyzed, thus driving DNA branch migration. The RuvB motors rotate together with the DNA substrate, which together with the progressing nucleotide cycle form the mechanistic basis for DNA recombination by continuous HJ branch migration. Branch migration allows RuvC to scan DNA until it finds its consensus sequence, where it cleaves and resolves cruciform DNA. The protein is Holliday junction branch migration complex subunit RuvB of Rhodopseudomonas palustris (strain BisA53).